We begin with the raw amino-acid sequence, 141 residues long: Nucleoside diphosphate kinase (141 aa).

ATP contacts are provided by Lys11, Phe59, Arg87, Thr93, Arg104, and Asn114. His117 (pros-phosphohistidine intermediate) is an active-site residue.

The protein belongs to the NDK family. In terms of assembly, homotetramer. Mg(2+) is required as a cofactor.

Its subcellular location is the cytoplasm. It catalyses the reaction a 2'-deoxyribonucleoside 5'-diphosphate + ATP = a 2'-deoxyribonucleoside 5'-triphosphate + ADP. The catalysed reaction is a ribonucleoside 5'-diphosphate + ATP = a ribonucleoside 5'-triphosphate + ADP. Major role in the synthesis of nucleoside triphosphates other than ATP. The ATP gamma phosphate is transferred to the NDP beta phosphate via a ping-pong mechanism, using a phosphorylated active-site intermediate. The sequence is that of Nucleoside diphosphate kinase from Hamiltonella defensa subsp. Acyrthosiphon pisum (strain 5AT).